The sequence spans 314 residues: Methionyl-tRNA formyltransferase (314 aa).

(6S)-5,6,7,8-tetrahydrofolate is bound at residue 113–116; sequence SLLP.

Belongs to the Fmt family.

The catalysed reaction is L-methionyl-tRNA(fMet) + (6R)-10-formyltetrahydrofolate = N-formyl-L-methionyl-tRNA(fMet) + (6S)-5,6,7,8-tetrahydrofolate + H(+). Attaches a formyl group to the free amino group of methionyl-tRNA(fMet). The formyl group appears to play a dual role in the initiator identity of N-formylmethionyl-tRNA by promoting its recognition by IF2 and preventing the misappropriation of this tRNA by the elongation apparatus. This Pseudomonas aeruginosa (strain UCBPP-PA14) protein is Methionyl-tRNA formyltransferase.